Consider the following 122-residue polypeptide: Large ribosomal subunit protein uL14 (122 aa).

Belongs to the universal ribosomal protein uL14 family. Part of the 50S ribosomal subunit. Forms a cluster with proteins L3 and L19. In the 70S ribosome, L14 and L19 interact and together make contacts with the 16S rRNA in bridges B5 and B8.

Functionally, binds to 23S rRNA. Forms part of two intersubunit bridges in the 70S ribosome. In Fervidobacterium nodosum (strain ATCC 35602 / DSM 5306 / Rt17-B1), this protein is Large ribosomal subunit protein uL14.